The sequence spans 430 residues: Adenylosuccinate synthetase (430 aa).

GTP contacts are provided by residues 12-18 (GDEGKGK) and 40-42 (GHT). Aspartate 13 serves as the catalytic Proton acceptor. Mg(2+)-binding residues include aspartate 13 and glycine 40. Residues 13–16 (DEGK), 38–41 (NAGH), threonine 129, arginine 143, glutamine 224, threonine 239, and arginine 303 each bind IMP. Catalysis depends on histidine 41, which acts as the Proton donor. 299-305 (TVSNRER) serves as a coordination point for substrate. GTP-binding positions include arginine 305, 331–333 (KLD), and 413–415 (STG).

The protein belongs to the adenylosuccinate synthetase family. Homodimer. Requires Mg(2+) as cofactor.

The protein localises to the cytoplasm. The catalysed reaction is IMP + L-aspartate + GTP = N(6)-(1,2-dicarboxyethyl)-AMP + GDP + phosphate + 2 H(+). Its pathway is purine metabolism; AMP biosynthesis via de novo pathway; AMP from IMP: step 1/2. In terms of biological role, plays an important role in the de novo pathway of purine nucleotide biosynthesis. Catalyzes the first committed step in the biosynthesis of AMP from IMP. This chain is Adenylosuccinate synthetase, found in Ehrlichia ruminantium (strain Welgevonden).